The sequence spans 77 residues: Acyl carrier protein (77 aa).

Residues 1 to 76 enclose the Carrier domain; the sequence is MSIEERVKKI…SAIDYVAKAN (76 aa). Residue serine 36 is modified to O-(pantetheine 4'-phosphoryl)serine.

This sequence belongs to the acyl carrier protein (ACP) family. In terms of processing, 4'-phosphopantetheine is transferred from CoA to a specific serine of apo-ACP by AcpS. This modification is essential for activity because fatty acids are bound in thioester linkage to the sulfhydryl of the prosthetic group.

The protein resides in the cytoplasm. Its pathway is lipid metabolism; fatty acid biosynthesis. Its function is as follows. Carrier of the growing fatty acid chain in fatty acid biosynthesis. The sequence is that of Acyl carrier protein from Haemophilus ducreyi (strain 35000HP / ATCC 700724).